The chain runs to 245 residues: Carboxymethylenebutenolidase homolog (245 aa).

Ala2 is subject to N-acetylalanine. At Lys36 the chain carries N6-acetyllysine. Active-site residues include Cys132, Asp179, and His212. Position 223 is a phosphoserine (Ser223).

Belongs to the dienelactone hydrolase family.

The protein localises to the cytoplasm. Its subcellular location is the cytosol. In terms of biological role, cysteine hydrolase. The chain is Carboxymethylenebutenolidase homolog (CMBL) from Pongo abelii (Sumatran orangutan).